Here is a 201-residue protein sequence, read N- to C-terminus: FMN-dependent NADH:quinone oxidoreductase (201 aa).

FMN contacts are provided by residues S10, 16–18, 96–99, and 140–143; these read SQS, MYNF, and SRGG.

This sequence belongs to the azoreductase type 1 family. As to quaternary structure, homodimer. FMN serves as cofactor.

It catalyses the reaction 2 a quinone + NADH + H(+) = 2 a 1,4-benzosemiquinone + NAD(+). The enzyme catalyses N,N-dimethyl-1,4-phenylenediamine + anthranilate + 2 NAD(+) = 2-(4-dimethylaminophenyl)diazenylbenzoate + 2 NADH + 2 H(+). Functionally, quinone reductase that provides resistance to thiol-specific stress caused by electrophilic quinones. Also exhibits azoreductase activity. Catalyzes the reductive cleavage of the azo bond in aromatic azo compounds to the corresponding amines. The protein is FMN-dependent NADH:quinone oxidoreductase of Yersinia enterocolitica serotype O:8 / biotype 1B (strain NCTC 13174 / 8081).